The sequence spans 93 residues: Large ribosomal subunit protein bL27 (93 aa).

The tract at residues 1–22 (MAHKKAGGSSRNGRDSEGRRLG) is disordered.

Belongs to the bacterial ribosomal protein bL27 family.

The chain is Large ribosomal subunit protein bL27 from Methylobacterium sp. (strain 4-46).